Here is a 142-residue protein sequence, read N- to C-terminus: Large ribosomal subunit protein uL11 (142 aa).

The protein belongs to the universal ribosomal protein uL11 family. Part of the ribosomal stalk of the 50S ribosomal subunit. Interacts with L10 and the large rRNA to form the base of the stalk. L10 forms an elongated spine to which L12 dimers bind in a sequential fashion forming a multimeric L10(L12)X complex. In terms of processing, one or more lysine residues are methylated.

Forms part of the ribosomal stalk which helps the ribosome interact with GTP-bound translation factors. The polypeptide is Large ribosomal subunit protein uL11 (Citrobacter koseri (strain ATCC BAA-895 / CDC 4225-83 / SGSC4696)).